Consider the following 315-residue polypeptide: DDRGK domain-containing protein 1 (315 aa).

The helical transmembrane segment at 1-28 threads the bilayer; it reads MVGPWVYLVAAVLLIGLILFLTRSRGRA. The segment at 1–115 is mediates interaction with CDK5RAP3; it reads MVGPWVYLVA…IEKPAEVHPT (115 aa). At 29–315 the chain is on the cytoplasmic side; that stretch reads AAADGEPLHN…GQDLPAQASA (287 aa). The tract at residues 30 to 184 is disordered; that stretch reads AADGEPLHNE…ERKAQEEQAR (155 aa). Residues 34–43 show a composition bias toward basic and acidic residues; it reads EPLHNEEERA. Ser73 carries the post-translational modification Phosphoserine. The segment at 119 to 217 is mediates interaction with TRIP4; that stretch reads GAKKLRKLEE…MTEEQSHSFL (99 aa). Residues 125–184 show a composition bias toward basic and acidic residues; it reads KLEEKQARKAQREAEEAEREERKRLESQREAEWKKEEERLRLKEEQKEEEERKAQEEQAR. The UFM1-interacting motif (UFIM) signature appears at 196 to 210; that stretch reads AFVVEEEGVSETMTE. Positions 217–315 are mediates interaction with UFL1; it reads LTEFINYIKK…GQDLPAQASA (99 aa). One can recognise a PCI domain in the interval 230–274; sequence VLLEDLAFQMGLRTQDAINRIQDLLTEGTLTGVIDDRGKFIYITP. Lys268 is covalently cross-linked (Glycyl lysine isopeptide (Lys-Gly) (interchain with G-Cter in UFM1)).

It belongs to the DDRGK1 family. Component of the UFM1 ribosome E3 ligase (UREL) complex, composed of UFL1, DDRGK1 and CDK5RAP3. Interacts with (unphosphorylated) ERN1/IRE1-alpha; interaction is dependent on UFM1 and takes place in response to endoplasmic reticulum stress, regulating ERN1/IRE1-alpha stability. Interacts with NFKBIA. Interacts with SOX9. In terms of processing, ufmylated; conjugated to ubiquitin-like protein UFM1, probably at Lys-268 by UFL1. The relevance of ufmylation is however unclear: as DDRGK1 acts as a substrate adapter for ufmylation, it is uncertain whether ufmylation is a collateral effect of the ufmylation process or whether it is required to regulate its activity. Post-translationally, ubiquitinated. Ubiquitination probably triggers proteasomal degradation and is negatively regulated by UFL1, the enzyme involved in the ufmylation of DDRGK1. As to expression, ubiquitously expressed. Higher expression in pancreatic islets, pancreatic acini and testis (at protein level). Highly expressed in the intestinal exocrine cells.

The protein localises to the endoplasmic reticulum membrane. Functionally, component of the UFM1 ribosome E3 ligase (UREL) complex, a multiprotein complex that catalyzes ufmylation of endoplasmic reticulum-docked proteins. The UREL complex plays a key role in ribosome recycling by mediating mono-ufmylation of the RPL26/uL24 subunit of the 60S ribosome following ribosome dissociation: ufmylation weakens the junction between post-termination 60S subunits and SEC61 translocons, promoting release and recycling of the large ribosomal subunit from the endoplasmic reticulum membrane. Ufmylation of RPL26/uL24 and subsequent 60S ribosome recycling either take place after normal termination of translation or after ribosome stalling during cotranslational translocation at the endoplasmic reticulum. Within the UREL complex, DDRGK1 tethers the complex to the endoplasmic reticulum membrane to restrict its activity to endoplasmic reticulum-docked ribosomes and acts as an ufmylation 'reader': following RPL26/uL24 ufmylation, DDRGK1 specifically binds to ufmylated RPL26/uL24 via its UFIM motif, resulting in stable association between the 60S ribosome and the UREL complex, followed by dissociation of the 60S ribosome subunit from the endoplasmic reticulum membrane. The UREL complex is also involved in reticulophagy in response to endoplasmic reticulum stress by promoting ufmylation of proteins such as CYB5R3 and RPN1, thereby promoting lysosomal degradation of ufmylated proteins. Ufmylation-dependent reticulophagy inhibits the unfolded protein response (UPR) by regulating ERN1/IRE1-alpha stability. Acts as a regulator of immunity by promoting differentiation of B-cells into plasma cells: acts by promoting expansion of the endoplasmic reticulum and regulating the unfolded protein response (UPR). May also be required for TRIP4 ufmylation. May play a role in NF-kappa-B-mediated transcription through regulation of the phosphorylation and the degradation of NFKBIA, the inhibitor of NF-kappa-B. Plays a role in cartilage development through SOX9, inhibiting the ubiquitin-mediated proteasomal degradation of this transcriptional regulator. Required for stabilization and ufmylation of ATG9A. The sequence is that of DDRGK domain-containing protein 1 from Mus musculus (Mouse).